Reading from the N-terminus, the 204-residue chain is Glycerol-3-phosphate acyltransferase (204 aa).

Helical transmembrane passes span 8–28 (ILIF…CYIF), 53–73 (VPAA…VVIA), 81–101 (FITA…IFFG), 116–136 (FGFS…VAII), and 155–175 (VIFT…IIIL).

Belongs to the PlsY family. As to quaternary structure, probably interacts with PlsX.

The protein resides in the cell inner membrane. The enzyme catalyses an acyl phosphate + sn-glycerol 3-phosphate = a 1-acyl-sn-glycero-3-phosphate + phosphate. The protein operates within lipid metabolism; phospholipid metabolism. Its function is as follows. Catalyzes the transfer of an acyl group from acyl-phosphate (acyl-PO(4)) to glycerol-3-phosphate (G3P) to form lysophosphatidic acid (LPA). This enzyme utilizes acyl-phosphate as fatty acyl donor, but not acyl-CoA or acyl-ACP. In Francisella tularensis subsp. holarctica (strain FTNF002-00 / FTA), this protein is Glycerol-3-phosphate acyltransferase.